A 235-amino-acid polypeptide reads, in one-letter code: Probable queuosine precursor transporter (235 aa).

6 helical membrane-spanning segments follow: residues 17 to 37 (IIWL…FVQI), 56 to 76 (FHST…DLTV), 87 to 107 (IIFV…VLFS), 127 to 147 (IAIA…IVFN), 155 to 175 (WWVA…FVFF), and 201 to 221 (FKLF…LNVI).

The protein belongs to the vitamin uptake transporter (VUT/ECF) (TC 2.A.88) family. Q precursor transporter subfamily.

It localises to the cell inner membrane. Its function is as follows. Involved in the import of queuosine (Q) precursors, required for Q precursor salvage. This chain is Probable queuosine precursor transporter, found in Haemophilus influenzae (strain ATCC 51907 / DSM 11121 / KW20 / Rd).